The sequence spans 710 residues: Polyribonucleotide nucleotidyltransferase (710 aa).

Residues aspartate 486 and aspartate 492 each contribute to the Mg(2+) site. The 60-residue stretch at 553-612 (PRIHTIKISVDKIKDVIGKGGSVIRALTEETGTTIEIEDDGTVKIAATDGDKAKFAIRRI) folds into the KH domain. Residues 622–690 (GRIYNGKVTR…RQGRVRLSIK (69 aa)) enclose the S1 motif domain. The segment at 690 to 710 (KEAGEQAQPEAEAVPAAPEAE) is disordered. The span at 694–710 (EQAQPEAEAVPAAPEAE) shows a compositional bias: low complexity.

It belongs to the polyribonucleotide nucleotidyltransferase family. As to quaternary structure, component of the RNA degradosome, which is a multiprotein complex involved in RNA processing and mRNA degradation. The cofactor is Mg(2+).

It is found in the cytoplasm. The catalysed reaction is RNA(n+1) + phosphate = RNA(n) + a ribonucleoside 5'-diphosphate. Functionally, involved in mRNA degradation. Catalyzes the phosphorolysis of single-stranded polyribonucleotides processively in the 3'- to 5'-direction. The chain is Polyribonucleotide nucleotidyltransferase from Erwinia tasmaniensis (strain DSM 17950 / CFBP 7177 / CIP 109463 / NCPPB 4357 / Et1/99).